The following is a 292-amino-acid chain: Acetylglutamate kinase (292 aa).

Substrate contacts are provided by residues 64–65 (GG), R86, and N190.

The protein belongs to the acetylglutamate kinase family. ArgB subfamily.

It is found in the cytoplasm. The catalysed reaction is N-acetyl-L-glutamate + ATP = N-acetyl-L-glutamyl 5-phosphate + ADP. Its pathway is amino-acid biosynthesis; L-arginine biosynthesis; N(2)-acetyl-L-ornithine from L-glutamate: step 2/4. Catalyzes the ATP-dependent phosphorylation of N-acetyl-L-glutamate. This chain is Acetylglutamate kinase, found in Geobacter metallireducens (strain ATCC 53774 / DSM 7210 / GS-15).